The chain runs to 248 residues: tRNA uridine(34) hydroxylase (248 aa).

The Rhodanese domain maps to 124–218; sequence TKQDVIVVDT…YLEDTQNKNN (95 aa). The active-site Cysteine persulfide intermediate is cysteine 178.

The protein belongs to the TrhO family.

The catalysed reaction is uridine(34) in tRNA + AH2 + O2 = 5-hydroxyuridine(34) in tRNA + A + H2O. In terms of biological role, catalyzes oxygen-dependent 5-hydroxyuridine (ho5U) modification at position 34 in tRNAs. The chain is tRNA uridine(34) hydroxylase from Rickettsia bellii (strain OSU 85-389).